A 446-amino-acid polypeptide reads, in one-letter code: Bifunctional protein GlmU (446 aa).

The pyrophosphorylase stretch occupies residues methionine 1 to arginine 225. UDP-N-acetyl-alpha-D-glucosamine-binding positions include leucine 6–glycine 9, lysine 20, glutamine 70, and glycine 75–threonine 76. Aspartate 98 is a binding site for Mg(2+). UDP-N-acetyl-alpha-D-glucosamine is bound by residues glycine 135, glutamate 150, asparagine 165, and asparagine 223. Asparagine 223 is a Mg(2+) binding site. A linker region spans residues valine 226–glutamate 246. The N-acetyltransferase stretch occupies residues glycine 247 to lysine 446. UDP-N-acetyl-alpha-D-glucosamine-binding residues include arginine 328 and lysine 346. Histidine 358 serves as the catalytic Proton acceptor. 2 residues coordinate UDP-N-acetyl-alpha-D-glucosamine: tyrosine 361 and asparagine 372. Residues alanine 375, asparagine 381–tyrosine 382, serine 400, alanine 418, and arginine 435 each bind acetyl-CoA.

This sequence in the N-terminal section; belongs to the N-acetylglucosamine-1-phosphate uridyltransferase family. It in the C-terminal section; belongs to the transferase hexapeptide repeat family. As to quaternary structure, homotrimer. It depends on Mg(2+) as a cofactor.

The protein resides in the cytoplasm. The catalysed reaction is alpha-D-glucosamine 1-phosphate + acetyl-CoA = N-acetyl-alpha-D-glucosamine 1-phosphate + CoA + H(+). The enzyme catalyses N-acetyl-alpha-D-glucosamine 1-phosphate + UTP + H(+) = UDP-N-acetyl-alpha-D-glucosamine + diphosphate. It functions in the pathway nucleotide-sugar biosynthesis; UDP-N-acetyl-alpha-D-glucosamine biosynthesis; N-acetyl-alpha-D-glucosamine 1-phosphate from alpha-D-glucosamine 6-phosphate (route II): step 2/2. It participates in nucleotide-sugar biosynthesis; UDP-N-acetyl-alpha-D-glucosamine biosynthesis; UDP-N-acetyl-alpha-D-glucosamine from N-acetyl-alpha-D-glucosamine 1-phosphate: step 1/1. Its pathway is bacterial outer membrane biogenesis; LPS lipid A biosynthesis. Catalyzes the last two sequential reactions in the de novo biosynthetic pathway for UDP-N-acetylglucosamine (UDP-GlcNAc). The C-terminal domain catalyzes the transfer of acetyl group from acetyl coenzyme A to glucosamine-1-phosphate (GlcN-1-P) to produce N-acetylglucosamine-1-phosphate (GlcNAc-1-P), which is converted into UDP-GlcNAc by the transfer of uridine 5-monophosphate (from uridine 5-triphosphate), a reaction catalyzed by the N-terminal domain. In Carboxydothermus hydrogenoformans (strain ATCC BAA-161 / DSM 6008 / Z-2901), this protein is Bifunctional protein GlmU.